We begin with the raw amino-acid sequence, 570 residues long: Proline--tRNA ligase (570 aa).

It belongs to the class-II aminoacyl-tRNA synthetase family. ProS type 1 subfamily. In terms of assembly, homodimer.

It localises to the cytoplasm. The enzyme catalyses tRNA(Pro) + L-proline + ATP = L-prolyl-tRNA(Pro) + AMP + diphosphate. Its function is as follows. Catalyzes the attachment of proline to tRNA(Pro) in a two-step reaction: proline is first activated by ATP to form Pro-AMP and then transferred to the acceptor end of tRNA(Pro). As ProRS can inadvertently accommodate and process non-cognate amino acids such as alanine and cysteine, to avoid such errors it has two additional distinct editing activities against alanine. One activity is designated as 'pretransfer' editing and involves the tRNA(Pro)-independent hydrolysis of activated Ala-AMP. The other activity is designated 'posttransfer' editing and involves deacylation of mischarged Ala-tRNA(Pro). The misacylated Cys-tRNA(Pro) is not edited by ProRS. The chain is Proline--tRNA ligase from Geotalea daltonii (strain DSM 22248 / JCM 15807 / FRC-32) (Geobacter daltonii).